The primary structure comprises 65 residues: Trypsin inhibitor 1 (65 aa).

3 disulfides stabilise this stretch: cysteine 39/cysteine 56, cysteine 46/cysteine 58, and cysteine 52/cysteine 64.

This sequence belongs to the protease inhibitor I7 (squash-type serine protease inhibitor) family.

Its subcellular location is the secreted. In terms of biological role, inhibits trypsin. This Trichosanthes kirilowii (Chinese snake gourd) protein is Trypsin inhibitor 1.